The chain runs to 345 residues: Transcription factor 19 (345 aa).

The 58-residue stretch at 31 to 88 folds into the FHA domain; that stretch reads YRLGHRADLCDVALRPQQEPGLISGIHAELHAEPRGDDWRVSLEDHSSQGTLVNNVRL. Ser78 is subject to Phosphoserine. 2 disordered regions span residues 147–167 and 190–227; these read AGFR…STLS and LTFS…RKSV. The PHD-type zinc-finger motif lies at 293 to 342; sequence AAPCCCLPQEETVAWVQCDGCDVWFHVACVGCSIQAAREADFRCPGCRAG. Positions 296, 298, 310, 313, 318, 321, 336, and 339 each coordinate Zn(2+).

The protein resides in the nucleus. Functionally, potential transcription factor that may play a role in the regulation of genes involved in cell cycle G1/S transition. May bind to regulatory elements of genes, including the promoter of the transcription factor FOXO1. This chain is Transcription factor 19 (TCF19), found in Pan troglodytes (Chimpanzee).